The following is a 385-amino-acid chain: Protein pelota homolog (385 aa).

Residue K162 forms a Glycyl lysine isopeptide (Lys-Gly) (interchain with G-Cter in SUMO2) linkage. Residues S374, S380, S381, and S382 each carry the phosphoserine modification.

It belongs to the eukaryotic release factor 1 family. Pelota subfamily. Component of the Pelota-HBS1L complex, also named Dom34-Hbs1 complex, composed of PELO and HBS1L. Interacts with PINK1. Interacts with ABCE1. Interacts with CNOT4. A divalent metal cation serves as cofactor. As to expression, ubiquitously expressed.

It is found in the cytoplasm. Functionally, component of the Pelota-HBS1L complex, a complex that recognizes stalled ribosomes and triggers the No-Go Decay (NGD) pathway. In the Pelota-HBS1L complex, PELO recognizes ribosomes stalled at the 3' end of an mRNA and engages stalled ribosomes by destabilizing mRNA in the mRNA channel. Following mRNA extraction from stalled ribosomes by the SKI complex, the Pelota-HBS1L complex promotes recruitment of ABCE1, which drives the disassembly of stalled ribosomes, followed by degradation of damaged mRNAs as part of the NGD pathway. As part of the PINK1-regulated signaling, upon mitochondrial damage is recruited to the ribosome/mRNA-ribonucleoprotein complex associated to mitochondrial outer membrane thereby enabling the recruitment of autophagy receptors and induction of mitophagy. The protein is Protein pelota homolog of Homo sapiens (Human).